We begin with the raw amino-acid sequence, 370 residues long: ATP synthase gamma chain, chloroplastic (370 aa).

A chloroplast-targeting transit peptide spans 1-54 (MRSFCIAALLAVASAFTTQPTSFTVKTANVGERASGVFPEQSSAHRTRKATIVM). The active site involves cysteine 145.

This sequence belongs to the ATPase gamma chain family. As to quaternary structure, F-type ATPases have 2 components, CF(1) - the catalytic core - and CF(0) - the membrane proton channel. CF(1) has five subunits: alpha(3), beta(3), gamma(1), delta(1), epsilon(1). CF(0) has four main subunits: a, b, b' and c.

Its subcellular location is the plastid. It is found in the chloroplast thylakoid membrane. Its function is as follows. Produces ATP from ADP in the presence of a proton gradient across the membrane. The gamma chain is believed to be important in regulating ATPase activity and the flow of protons through the CF(0) complex. The chain is ATP synthase gamma chain, chloroplastic (ATPC) from Phaeodactylum tricornutum (Diatom).